Reading from the N-terminus, the 155-residue chain is Small ribosomal subunit protein uS9 (155 aa).

This sequence belongs to the universal ribosomal protein uS9 family.

In Sinorhizobium fredii (strain NBRC 101917 / NGR234), this protein is Small ribosomal subunit protein uS9.